Here is a 1070-residue protein sequence, read N- to C-terminus: Ubiquitin-protein ligase E3B (1070 aa).

Residue methionine 1 is modified to N-acetylmethionine. Residues 29–58 form the IQ domain; it reads RERSAVTIQALVRSFLCRRRLHRDIRKEID. Serine 421 carries the phosphoserine modification. The HECT domain maps to 704–1070; that stretch reads SQHAMKGVIR…ISMNTGFELS (367 aa). Cysteine 1038 serves as the catalytic Glycyl thioester intermediate.

Widely expressed. High expression is observed in developing central nervous system.

Its subcellular location is the postsynaptic density. The catalysed reaction is S-ubiquitinyl-[E2 ubiquitin-conjugating enzyme]-L-cysteine + [acceptor protein]-L-lysine = [E2 ubiquitin-conjugating enzyme]-L-cysteine + N(6)-ubiquitinyl-[acceptor protein]-L-lysine.. It functions in the pathway protein modification; protein ubiquitination. Functionally, E3 ubiquitin-protein ligase which accepts ubiquitin from an E2 ubiquitin-conjugating enzyme in the form of a thioester and then directly transfers the ubiquitin to targeted substrates. Ubiquitinates BCKDK and targets it for degradation, thereby regulating various metabolic processes. Involved in the positive regulation of neurite branching in hippocampal neurons and the control of neuronal spine number and morphology, through the ubiquitination of PPP3CC. This is Ubiquitin-protein ligase E3B (Ube3b) from Mus musculus (Mouse).